An 861-amino-acid chain; its full sequence is Piwi-like protein 1 (861 aa).

The span at 1-13 (MTGRARARARGRA) shows a compositional bias: basic residues. The tract at residues 1 to 64 (MTGRARARAR…TAGGTAKSQG (64 aa)) is disordered. The residue at position 14 (R14) is an Omega-N-methylarginine; by PRMT5; alternate. R14 carries the post-translational modification Symmetric dimethylarginine; by PRMT5; alternate. Over residues 17–27 (ETAQLVGSTAS) the composition is skewed to polar residues. An Omega-N-methylarginine; by PRMT5 modification is found at R49. R53 carries the post-translational modification Omega-N-methylarginine; alternate. At R53 the chain carries Symmetric dimethylarginine; alternate. The D-box signature appears at 217 to 224 (RRLLKIMN). The PAZ domain occupies 278–391 (TVLDFMFNFY…LIPELCYLTG (114 aa)). The segment at 316–318 (TYR) is required for binding 2'-O-methylated 3'-end of piRNAs. R370 is modified (omega-N-methylarginine; by PRMT5). Residues 479-615 (SKETRGAPLI…LQMNCKMGGE (137 aa)) form an MID region region. In terms of domain architecture, Piwi spans 555–847 (IVVCLLSSNR…LAFLVGQSIH (293 aa)). Residues D632, E670, D702, and H836 contribute to the active site.

It belongs to the argonaute family. Piwi subfamily. Interacts (via Piwi domain) with DICER1, suggesting that it forms ribonucleoprotein RISC complexes; this interaction is regulated by HSP90AB1 activity. Interacts with MAEL, KIF17, PABPC1, PRMT5 and WDR77. Interacts (when methylated on arginine residues) with TDRD1, TDRKH/TDRD2, RNF17/TDRD4, TDRD6, TDRD7 and TDRD9. Interacts with CLOCK. Interacts with MOV10L1. Interacts with ANAPC10; interaction oly takes place following piRNA-binding. Interacts with RNF8; leading to sequester RNF8 in the cytoplasm. Interacts with TEX19. Mg(2+) is required as a cofactor. Arginine methylation by PRMT5 is required for the interaction with Tudor domain-containing protein (TDRD1, TDRKH/TDRD2, RNF17/TDRD4, TDRD6, TDRD7 and TDRD9) and subsequent localization to the meiotic nuage, also named P granule. In terms of processing, ubiquitinated by the anaphase promoting complex/cyclosome (APC/C) in late spermatids, leading to its degradation. Ubiquitination only takes place following piRNA-binding in adult testis. Ubiquitination and degradation in late spermatogenesis by APC/C is probably required to release RNF8 from the cytoplasm and promote histone to protamine exchange by RNF8. Expressed in spermatocytes and spermatids. Also detected in prostate cancer (at protein level). Detected in most fetal and adult tissues. Expressed in testes, specifically in germline cells; detected in spermatocytes and spermatids during spermatogenesis. Increased expression in testicular tumors originating from embryonic germ cells with retention of germ cells phenotype. No expression in testicular tumors of somatic origin, such as Sertoli cell and Leydig cell tumors. Overexpressed in gastric cancer cells. Isoform 3: Ubiquitously expressed, and specifically in CD34(+) hematopoietic progenitor cells but not in more differentiated cells.

Its subcellular location is the cytoplasm. Its function is as follows. Endoribonuclease that plays a central role in postnatal germ cells by repressing transposable elements and preventing their mobilization, which is essential for the germline integrity. Acts via the piRNA metabolic process, which mediates the repression of transposable elements during meiosis by forming complexes composed of piRNAs and Piwi proteins and governs the methylation and subsequent repression of transposons. Directly binds methylated piRNAs, a class of 24 to 30 nucleotide RNAs that are generated by a Dicer-independent mechanism and are primarily derived from transposons and other repeated sequence elements. Strongly prefers a uridine in the first position of their guide (g1U preference, also named 1U-bias). Not involved in the piRNA amplification loop, also named ping-pong amplification cycle. Acts as an endoribonuclease that cleaves transposon messenger RNAs. Besides their function in transposable elements repression, piRNAs are probably involved in other processes during meiosis such as translation regulation. Probable component of some RISC complex, which mediates RNA cleavage and translational silencing. Also plays a role in the formation of chromatoid bodies and is required for some miRNAs stability. Required to sequester RNF8 in the cytoplasm until late spermatogenesis; RNF8 being released upon ubiquitination and degradation of PIWIL1. May be a negative developmental regulator. The protein is Piwi-like protein 1 (PIWIL1) of Homo sapiens (Human).